Consider the following 54-residue polypeptide: Large ribosomal subunit protein bL32 (54 aa).

Positions 1–54 (MAVQQNRKTRSRRGMRRSHDALTAAQLSVDSTSGETHRRHHVTADGYYRGKKVI) are disordered. The segment covering 7–16 (RKTRSRRGMR) has biased composition (basic residues). The segment covering 25–34 (AQLSVDSTSG) has biased composition (polar residues).

Belongs to the bacterial ribosomal protein bL32 family.

This is Large ribosomal subunit protein bL32 from Tolumonas auensis (strain DSM 9187 / NBRC 110442 / TA 4).